The chain runs to 206 residues: Small ribosomal subunit protein uS4 (206 aa).

The region spanning 96-159 is the S4 RNA-binding domain; that stretch reads TRLDNVVYRM…KKQARISASL (64 aa).

This sequence belongs to the universal ribosomal protein uS4 family. As to quaternary structure, part of the 30S ribosomal subunit. Contacts protein S5. The interaction surface between S4 and S5 is involved in control of translational fidelity.

Functionally, one of the primary rRNA binding proteins, it binds directly to 16S rRNA where it nucleates assembly of the body of the 30S subunit. In terms of biological role, with S5 and S12 plays an important role in translational accuracy. This is Small ribosomal subunit protein uS4 from Shewanella violacea.